Reading from the N-terminus, the 159-residue chain is Small ribosomal subunit protein bS16 (159 aa).

Low complexity predominate over residues 102 to 119 (GIPEAAEEAPATESVAEA). Residues 102–159 (GIPEAAEEAPATESVAEAEVADVPESELSEAATETAAAELSPPEAEVEKPQVEEAVEA) are disordered. The segment covering 120–129 (EVADVPESEL) has biased composition (acidic residues). A compositionally biased stretch (low complexity) spans 130–145 (SEAATETAAAELSPPE).

It belongs to the bacterial ribosomal protein bS16 family.

This Synechococcus sp. (strain JA-2-3B'a(2-13)) (Cyanobacteria bacterium Yellowstone B-Prime) protein is Small ribosomal subunit protein bS16.